The sequence spans 698 residues: Serine/threonine-protein kinase Nek8 (698 aa).

Residues 4–258 (YERIRVVGRG…LSHIMAQPLC (255 aa)) form the Protein kinase domain. Residues 10 to 18 (VGRGAFGIV) and Lys-33 each bind ATP. Residue Asp-128 is the Proton acceptor of the active site. Residue Thr-162 is modified to Phosphothreonine; by autocatalysis. A disordered region spans residues 278–309 (EKSLTPGPPIASGSTGSRATSARCRGVPRGPV). Residues 288–309 (ASGSTGSRATSARCRGVPRGPV) are compositionally biased toward low complexity. 5 RCC1 repeats span residues 416–467 (GIIM…LSTD), 468–519 (GELF…LTSP), 520–585 (GRVL…ITAS), 586–637 (GDCY…VGAE), and 638–690 (GEVY…AVRS).

The protein belongs to the protein kinase superfamily. NEK Ser/Thr protein kinase family. NIMA subfamily. As to quaternary structure, interacts with PKD2; may regulate PKD2 targeting to the cilium. Interacts with ANKS6. Component of a complex containing at least ANKS6, INVS, NEK8 and NPHP3. ANKS6 may organize complex assembly by linking INVS and NPHP3 to NEK8 and INVS may target the complex to the proximal ciliary axoneme. Interacts with ANKS3. The cofactor is Mg(2+). Kidney, liver, and testis.

It localises to the cytoplasm. The protein resides in the cytoskeleton. Its subcellular location is the cell projection. The protein localises to the cilium. It is found in the microtubule organizing center. It localises to the centrosome. The protein resides in the cilium axoneme. The enzyme catalyses L-seryl-[protein] + ATP = O-phospho-L-seryl-[protein] + ADP + H(+). It catalyses the reaction L-threonyl-[protein] + ATP = O-phospho-L-threonyl-[protein] + ADP + H(+). Its function is as follows. Required for renal tubular integrity. May regulate local cytoskeletal structure in kidney tubule epithelial cells. May regulate ciliary biogenesis through targeting of proteins to the cilia. Plays a role in organogenesis and is involved in the regulation of the Hippo signaling pathway. The polypeptide is Serine/threonine-protein kinase Nek8 (Nek8) (Mus musculus (Mouse)).